The primary structure comprises 380 residues: UDP-3-O-acylglucosamine N-acyltransferase (380 aa).

Catalysis depends on histidine 263, which acts as the Proton acceptor.

It belongs to the transferase hexapeptide repeat family. LpxD subfamily. Homotrimer.

It catalyses the reaction a UDP-3-O-[(3R)-3-hydroxyacyl]-alpha-D-glucosamine + a (3R)-hydroxyacyl-[ACP] = a UDP-2-N,3-O-bis[(3R)-3-hydroxyacyl]-alpha-D-glucosamine + holo-[ACP] + H(+). Its pathway is bacterial outer membrane biogenesis; LPS lipid A biosynthesis. Catalyzes the N-acylation of UDP-3-O-acylglucosamine using 3-hydroxyacyl-ACP as the acyl donor. Is involved in the biosynthesis of lipid A, a phosphorylated glycolipid that anchors the lipopolysaccharide to the outer membrane of the cell. This is UDP-3-O-acylglucosamine N-acyltransferase from Rhodopirellula baltica (strain DSM 10527 / NCIMB 13988 / SH1).